A 256-amino-acid polypeptide reads, in one-letter code: Small ribosomal subunit protein eS1 (256 aa).

At Ala2 the chain carries N-acetylalanine; partial.

It belongs to the eukaryotic ribosomal protein eS1 family. As to quaternary structure, component of the small ribosomal subunit. Mature ribosomes consist of a small (40S) and a large (60S) subunit. The 40S subunit contains about 33 different proteins and 1 molecule of RNA (18S). The 60S subunit contains about 49 different proteins and 3 molecules of RNA (25S, 5.8S and 5S).

The protein localises to the cytoplasm. The sequence is that of Small ribosomal subunit protein eS1 from Eremothecium gossypii (strain ATCC 10895 / CBS 109.51 / FGSC 9923 / NRRL Y-1056) (Yeast).